Here is a 590-residue protein sequence, read N- to C-terminus: Mitochondrial distribution and morphology protein 34 (590 aa).

The region spanning 1 to 225 (MSFIFNRETF…LPSVIFNMSQ (225 aa)) is the SMP-LTD domain. The segment covering 393–405 (RRKIKMRSRKPSK) has biased composition (basic residues). The interval 393-456 (RRKIKMRSRK…APEGGPNAED (64 aa)) is disordered. The span at 413–427 (PAQNDSGTSSCSNVA) shows a compositional bias: polar residues.

It belongs to the MDM34 family. Component of the ER-mitochondria encounter structure (ERMES) or MDM complex, composed of MMM1, MDM10, MDM12 and MDM34.

Its subcellular location is the mitochondrion outer membrane. Its function is as follows. Component of the ERMES/MDM complex, which serves as a molecular tether to connect the endoplasmic reticulum (ER) and mitochondria. Components of this complex are involved in the control of mitochondrial shape and protein biogenesis, and function in nonvesicular lipid trafficking between the ER and mitochondria. MDM34 is required for the interaction of the ER-resident membrane protein MMM1 and the outer mitochondrial membrane-resident beta-barrel protein MDM10. This is Mitochondrial distribution and morphology protein 34 from Eremothecium gossypii (strain ATCC 10895 / CBS 109.51 / FGSC 9923 / NRRL Y-1056) (Yeast).